A 207-amino-acid polypeptide reads, in one-letter code: Large ribosomal subunit protein uL4 (207 aa).

A disordered region spans residues 49–73; sequence AKKRGEVSGGGKKPWKQKGGGRARA.

It belongs to the universal ribosomal protein uL4 family. In terms of assembly, part of the 50S ribosomal subunit.

Its function is as follows. One of the primary rRNA binding proteins, this protein initially binds near the 5'-end of the 23S rRNA. It is important during the early stages of 50S assembly. It makes multiple contacts with different domains of the 23S rRNA in the assembled 50S subunit and ribosome. In terms of biological role, forms part of the polypeptide exit tunnel. This is Large ribosomal subunit protein uL4 from Helicobacter hepaticus (strain ATCC 51449 / 3B1).